The sequence spans 492 residues: Cytochrome P450 2A2 (492 aa).

Residue Cys-437 coordinates heme.

This sequence belongs to the cytochrome P450 family. Heme is required as a cofactor. As to expression, liver specific.

Its subcellular location is the endoplasmic reticulum membrane. It localises to the microsome membrane. It carries out the reaction an organic molecule + reduced [NADPH--hemoprotein reductase] + O2 = an alcohol + oxidized [NADPH--hemoprotein reductase] + H2O + H(+). Its function is as follows. Highly active in the 15-alpha-hydroxylation of testosterone. The sequence is that of Cytochrome P450 2A2 (Cyp2a2) from Rattus norvegicus (Rat).